Reading from the N-terminus, the 343-residue chain is Dimethyladenosine transferase 1, mitochondrial (343 aa).

Residues 28–31 (QNFL), Asn29, Leu31, Gly56, Glu78, Asp133, and Asn169 each bind S-adenosyl-L-methionine.

This sequence belongs to the class I-like SAM-binding methyltransferase superfamily. rRNA adenine N(6)-methyltransferase family. KsgA subfamily.

The protein localises to the mitochondrion. Its function is as follows. Probable S-adenosyl-L-methionine-dependent methyltransferase which specifically dimethylates mitochondrial 12S rRNA at the conserved stem loop. Also required for basal transcription of mitochondrial DNA. Stimulates transcription independently of the methyltransferase activity. The sequence is that of Dimethyladenosine transferase 1, mitochondrial from Vermamoeba vermiformis (Amoeba).